The sequence spans 275 residues: Uridine-5'-phosphate dioxygenase (275 aa).

Fe cation is bound by residues histidine 105, aspartate 107, and histidine 247.

Fe(2+) serves as cofactor.

It catalyses the reaction UMP + 2-oxoglutarate + O2 = uridine-5'-aldehyde + succinate + phosphate + CO2. It functions in the pathway antibiotic biosynthesis. Its activity is regulated as follows. Enhanced by ascorbic acid and inhibited by Zn(2+). In terms of biological role, dioxygenase involved in the biosynthesis of the capuramycin-type nucleoside antibiotic A-102395. Catalyzes the dephosphorylation and oxidation of UMP to generate uridine-5'-aldehyde. Can also use the alternative alpha-keto acids pyruvate and alpha-ketoadipate (2-oxoadipate), with very low efficiency. Cannot use alpha-ketobutyrate, alpha-ketovalerate and oxaloacetate. In Amycolatopsis sp, this protein is Uridine-5'-phosphate dioxygenase.